Reading from the N-terminus, the 291-residue chain is Quinol oxidase subunit 2 (291 aa).

The first 28 residues, 1–28 (MQLKKAFWKLASLLPLSLLLFLGGCDKK), serve as a signal peptide directing secretion. Transmembrane regions (helical) follow at residues 49–69 (SFLLMSLIIAIVFILFTVILI) and 91–111 (LEIIWTLVPVIIVIALSIPTV).

It belongs to the cytochrome c oxidase subunit 2 family.

The protein localises to the cell membrane. The catalysed reaction is 2 a quinol + O2 = 2 a quinone + 2 H2O. Catalyzes quinol oxidation with the concomitant reduction of oxygen to water. Subunit II transfers the electrons from a quinol to the binuclear center of the catalytic subunit I. The chain is Quinol oxidase subunit 2 from Bacillus cereus (strain ATCC 14579 / DSM 31 / CCUG 7414 / JCM 2152 / NBRC 15305 / NCIMB 9373 / NCTC 2599 / NRRL B-3711).